The chain runs to 359 residues: N-acetyl-gamma-glutamyl-phosphate reductase (359 aa).

The active site involves C162.

It belongs to the NAGSA dehydrogenase family. Type 1 subfamily.

The protein resides in the cytoplasm. It carries out the reaction N-acetyl-L-glutamate 5-semialdehyde + phosphate + NADP(+) = N-acetyl-L-glutamyl 5-phosphate + NADPH + H(+). The protein operates within amino-acid biosynthesis; L-arginine biosynthesis; N(2)-acetyl-L-ornithine from L-glutamate: step 3/4. Its function is as follows. Catalyzes the NADPH-dependent reduction of N-acetyl-5-glutamyl phosphate to yield N-acetyl-L-glutamate 5-semialdehyde. The polypeptide is N-acetyl-gamma-glutamyl-phosphate reductase (Prochlorococcus marinus (strain SARG / CCMP1375 / SS120)).